The primary structure comprises 506 residues: MLSKVLPVLLGILLILQSRVEGPQTESKNEASSRDVVYGPQPQPLENQLLSEETKSTETETGSRVGKLPEASRILNTILSNYDHKLRPGIGEKPTVVTVEISVNSLGPLSILDMEYTIDIIFSQTWYDERLCYNDTFESLVLNGNVVSQLWIPDTFFRNSKRTHEHEITMPNQMVRIYKDGKVLYTIRMTIDAGCSLHMLRFPMDSHSCPLSFSSFSYPENEMIYKWENFKLEINEKNSWKLFQFDFTGVSNKTEIITTPVGDFMVMTIFFNVSRRFGYVAFQNYVPSSVTTMLSWVSFWIKTESAPARTSLGITSVLTMTTLGTFSRKNFPRVSYITALDFYIAICFVFCFCALLEFAVLNFLIYNQTKAHASPKLRHPRINSRAHARTRARSRACARQHQEAFVCQIVTTEGSDGEERPSCSAQQPPSPGSPEGPRSLCSKLACCEWCKRFKKYFCMVPDCEGSTWQQGRLCIHVYRLDNYSRVVFPVTFFFFNVLYWLVCLNL.

Residues 1–22 form the signal peptide; sequence MLSKVLPVLLGILLILQSRVEG. The disordered stretch occupies residues 23-66; it reads PQTESKNEASSRDVVYGPQPQPLENQLLSEETKSTETETGSRVG. Residues 23 to 280 are Extracellular-facing; that stretch reads PQTESKNEAS…FNVSRRFGYV (258 aa). Asn134 carries an N-linked (GlcNAc...) asparagine glycan. A disulfide bridge links Cys195 with Cys209. Asn252 carries an N-linked (GlcNAc...) asparagine glycan. Residues 281-301 form a helical membrane-spanning segment; sequence AFQNYVPSSVTTMLSWVSFWI. The Cytoplasmic portion of the chain corresponds to 302 to 307; it reads KTESAP. A helical membrane pass occupies residues 308-327; sequence ARTSLGITSVLTMTTLGTFS. At 328-343 the chain is on the extracellular side; sequence RKNFPRVSYITALDFY. A helical membrane pass occupies residues 344–364; that stretch reads IAICFVFCFCALLEFAVLNFL. The Cytoplasmic portion of the chain corresponds to 365 to 485; sequence IYNQTKAHAS…HVYRLDNYSR (121 aa). Positions 413 to 438 are disordered; the sequence is EGSDGEERPSCSAQQPPSPGSPEGPR. A helical membrane pass occupies residues 486 to 506; the sequence is VVFPVTFFFFNVLYWLVCLNL.

Belongs to the ligand-gated ion channel (TC 1.A.9) family. Gamma-aminobutyric acid receptor (TC 1.A.9.5) subfamily. GABRE sub-subfamily. Heteropentamer, formed by a combination of alpha (GABRA1-6), beta (GABRB1-3), gamma (GABRG1-3), delta (GABRD), epsilon (GABRE), rho (GABRR1-3), pi (GABRP) and theta (GABRQ) chains, each subunit exhibiting distinct physiological and pharmacological properties. As to expression, expressed in many tissues. Highest levels of expression in adult heart and placenta.

Its subcellular location is the cell membrane. The protein resides in the postsynaptic cell membrane. The enzyme catalyses chloride(in) = chloride(out). Its activity is regulated as follows. Potentiated by pentobarbital, loreclezole, and lanthanum and inhibited by zinc and furosemide. Introduction of the epsilon subunit to the receptor complex resulted in diminished modulatory effects by etomidate, propofol, pregnanolone and flurazepam. In terms of biological role, epsilon subunit of the heteropentameric ligand-gated chloride channel gated by gamma-aminobutyric acid (GABA), a major inhibitory neurotransmitter in the brain. GABA-gated chloride channels, also named GABA(A) receptors (GABAAR), consist of five subunits arranged around a central pore and contain GABA active binding site(s) located at the alpha and beta subunit interfaces. When activated by GABA, GABAARs selectively allow the flow of chloride anions across the cell membrane down their electrochemical gradient. GABAARs containing epsilon subunits also permit spontaneous chloride channel activity while preserving the structural information required for GABA-gated openings. GABARs containing epsilon subunit may regulate cardiac function. The polypeptide is Gamma-aminobutyric acid receptor subunit epsilon (Homo sapiens (Human)).